The chain runs to 548 residues: Terpene synthase 1 (548 aa).

Mg(2+) contacts are provided by D301, D305, D445, and E453. A DDXXD motif motif is present at residues 301–305 (DDTYD).

Belongs to the terpene synthase family. Tpsa subfamily. Requires Mg(2+) as cofactor. Mn(2+) is required as a cofactor.

It catalyses the reaction (2E,6E)-farnesyl diphosphate = (+)-valencene + diphosphate. Its pathway is secondary metabolite biosynthesis; terpenoid biosynthesis. Its function is as follows. Sesquiterpene synthase involved in the biosynthesis of volatile compounds which contribute to fruit flavor and aroma. Mediates the conversion of (2E,6E)-farnesyl diphosphate (FPP) into (+)-valencene. No activity detected with geranyl diphosphate (GPP). The chain is Terpene synthase 1 from Citrus sinensis (Sweet orange).